Consider the following 72-residue polypeptide: MIVPWQGLSPDTLDNLIESFVLREGTDYGEHERSLEQKVADVKRQLQSGEAVLVWSELHETVNIMPKKQFRD.

Belongs to the UPF0270 family.

This chain is UPF0270 protein YheU, found in Salmonella arizonae (strain ATCC BAA-731 / CDC346-86 / RSK2980).